We begin with the raw amino-acid sequence, 101 residues long: Small ribosomal subunit protein uS14 (101 aa).

It belongs to the universal ribosomal protein uS14 family. In terms of assembly, part of the 30S ribosomal subunit. Contacts proteins S3 and S10.

Binds 16S rRNA, required for the assembly of 30S particles and may also be responsible for determining the conformation of the 16S rRNA at the A site. The protein is Small ribosomal subunit protein uS14 of Rhizorhabdus wittichii (strain DSM 6014 / CCUG 31198 / JCM 15750 / NBRC 105917 / EY 4224 / RW1) (Sphingomonas wittichii).